Consider the following 211-residue polypeptide: Probable molybdenum cofactor guanylyltransferase (211 aa).

GTP-binding positions include 21-23 (LAG), K33, D84, and D116. D116 lines the Mg(2+) pocket.

It belongs to the MobA family. Requires Mg(2+) as cofactor.

The protein localises to the cytoplasm. It catalyses the reaction Mo-molybdopterin + GTP + H(+) = Mo-molybdopterin guanine dinucleotide + diphosphate. In terms of biological role, transfers a GMP moiety from GTP to Mo-molybdopterin (Mo-MPT) cofactor (Moco or molybdenum cofactor) to form Mo-molybdopterin guanine dinucleotide (Mo-MGD) cofactor. This chain is Probable molybdenum cofactor guanylyltransferase, found in Rhodopirellula baltica (strain DSM 10527 / NCIMB 13988 / SH1).